The following is a 214-amino-acid chain: Uridine kinase (214 aa).

15 to 22 (GASASGKS) contacts ATP.

It belongs to the uridine kinase family.

It is found in the cytoplasm. The catalysed reaction is uridine + ATP = UMP + ADP + H(+). The enzyme catalyses cytidine + ATP = CMP + ADP + H(+). It functions in the pathway pyrimidine metabolism; CTP biosynthesis via salvage pathway; CTP from cytidine: step 1/3. It participates in pyrimidine metabolism; UMP biosynthesis via salvage pathway; UMP from uridine: step 1/1. The protein is Uridine kinase of Tolumonas auensis (strain DSM 9187 / NBRC 110442 / TA 4).